The sequence spans 97 residues: RNA-binding protein Hfq (97 aa).

The 61-residue stretch at 10–70 folds into the Sm domain; that stretch reads DPFLNALRKE…ISTIVPARSV (61 aa).

The protein belongs to the Hfq family. As to quaternary structure, homohexamer.

RNA chaperone that binds small regulatory RNA (sRNAs) and mRNAs to facilitate mRNA translational regulation in response to envelope stress, environmental stress and changes in metabolite concentrations. Also binds with high specificity to tRNAs. The sequence is that of RNA-binding protein Hfq from Neisseria gonorrhoeae (strain ATCC 700825 / FA 1090).